A 248-amino-acid chain; its full sequence is uncharacterized protein (248 aa).

Helical transmembrane passes span isoleucine 65–threonine 85, serine 105–tyrosine 125, isoleucine 126–isoleucine 146, leucine 156–isoleucine 176, leucine 188–serine 208, and valine 222–threonine 242.

The protein resides in the cell membrane. This is an uncharacterized protein from Rickettsia prowazekii (strain Madrid E).